The sequence spans 67 residues: Peptide Hp1239 (67 aa).

The signal sequence occupies residues 1 to 23 (MKTQFTVLLITLVLFQMLSQSEA). The residue at position 36 (F36) is a Phenylalanine amide. The propeptide occupies 40–67 (GLSDLSDLDELFDGEITKADLDLLREIM).

It belongs to the non-disulfide-bridged peptide (NDBP) superfamily. Short antimicrobial peptide (group 4) family. In terms of tissue distribution, expressed by the venom gland.

It localises to the secreted. It is found in the target cell membrane. Its function is as follows. Amphipathic peptide with antibacterial activities. Shows antiviral activities against the herpes simplex virus type-1. It potently inhibits the initial infection by provoking the rupture of viral envelop and the dissociation of proteins from the virions (EC(50) is 0.41 uM). It also effectively inhibits viral attachment (EC(50) is 5.73 uM), viral entry (EC(50) is 4.32 uM) and viral proliferation after infection (EC(50) is 8.41 uM). Morever, it enters mammalian tested cells (Vero) and reduces the intracellular infectivity. This Heterometrus petersii (Asian forest scorpion) protein is Peptide Hp1239.